Consider the following 205-residue polypeptide: Proteasome subunit beta type-3 (205 aa).

This sequence belongs to the peptidase T1B family. In terms of assembly, the 26S proteasome consists of a 20S proteasome core and two 19S regulatory subunits. The 20S proteasome core is composed of 28 subunits that are arranged in four stacked rings, resulting in a barrel-shaped structure. The two end rings are each formed by seven alpha subunits, and the two central rings are each formed by seven beta subunits. The catalytic chamber with the active sites is on the inside of the barrel.

It localises to the cytoplasm. The protein localises to the nucleus. In terms of biological role, non-catalytic component of the proteasome, a multicatalytic proteinase complex which is characterized by its ability to cleave peptides with Arg, Phe, Tyr, Leu, and Glu adjacent to the leaving group at neutral or slightly basic pH. The proteasome has an ATP-dependent proteolytic activity. This Trypanosoma brucei brucei protein is Proteasome subunit beta type-3 (PSB3).